The following is a 2342-amino-acid chain: Outer kinetochore KNL1 complex subunit KNL1 (2342 aa).

The tract at residues Met-1–Ser-56 is disordered. A may mediate oligomerization region spans residues Met-1–Thr-250. The interaction with BUB1 and BUB1B stretch occupies residues Met-1–Leu-728. Interaction with microtubules regions lie at residues Arg-17–Leu-34 and Lys-53–Ser-80. The interaction with PP1CA; contains the protein phosphatase 1 (PP1) interaction motifs SILK, RVXF and phi-phi stretch occupies residues His-23 to Ser-80. Ser-24 is subject to Phosphoserine; by AURKB. Position 32 is a phosphoserine (Ser-32). Phosphoserine; by AURKB is present on Ser-60. Positions Glu-174–Gly-190 are interaction with BUB1. The tract at residues Ala-210–Asn-226 is interaction with BUB1B. A Phosphothreonine modification is found at Thr-539. 2 positions are modified to phosphoserine: Ser-578 and Ser-584. A Phosphothreonine modification is found at Thr-586. The interval Ala-620–Asn-646 is disordered. The segment covering Glu-622–Ser-633 has biased composition (low complexity). Ser-767 is modified (phosphoserine). The interval Glu-855–Asp-1201 is 2 X 104 AA approximate repeats. Residues Asp-885–Asp-989 form repeat 1. A Phosphothreonine modification is found at Thr-901. Residues Ser-956, Ser-1039, Ser-1076, and Ser-1088 each carry the phosphoserine modification. Repeat 2 spans residues Asp-1099–Asp-1201. The residue at position 1448 (Ser-1448) is a Phosphoserine. Positions Ser-1639 to Pro-1662 are disordered. Residues Lys-1642 to Lys-1651 show a composition bias toward basic and acidic residues. Residues Ser-1675 and Ser-1773 each carry the phosphoserine modification. Residues Thr-1789 to Ile-1803 carry the Nuclear localization signal motif. Position 1831 is a phosphoserine (Ser-1831). Residues Ser-1831 and Ser-1834 each carry the phosphoserine; by TTK modification. Residues Ser-1845 and Ser-1860 each carry the phosphoserine modification. The tract at residues Lys-1981–Gln-2108 is required for interaction with ZWINT. The stretch at Val-2024 to Ser-2133 forms a coiled coil. The tract at residues Glu-2091–Thr-2311 is interaction with NSL1, DSN1 and required for assembly into the outer kinetochore.

In terms of assembly, component of the KNL1 complex composed of KNL1 and ZWINT. Part of the ten-subunit outer kinetochore KMN network that includes the KNL1, MIS12 and NDC80 complexes; a bioriented kinetochore contains approximately 150 copies of the network. Interacts (via C-terminus) with the MIS12 complex subunits NSL1 (via C-terminus), PMF1 and DSN1; the interaction is direct. Interacts (via N-terminal region) with BUB1B (via BUB1 N-terminal domain); the interaction is direct and is required for cell cycle arrest upon activation of the mitotic spindle assembly checkpoint. Interacts (via N-terminal region) with BUB1 (via BUB1 N-terminal domain); the interaction is direct. Interacts with the protein phosphatase PP1 subunit PPP1CA; the interaction is direct and mutually exclusive with binding to microtubules. Interacts with the protein phosphatase PP1 subunit PPP1CC; the interaction is direct and mutually exclusive with binding to microtubules. Phosphorylation by AURKB negatively regulates its interaction with protein phosphatase 1 (PP1) subunit PPP1CA and with microtubules. Highly expressed in testis, where it is localized in germ cells, in particular in spermatocytes and in the pre-acrosome of round spermatids. Detected in the acrosome of ejaculated spermatozoa. Detected in adult thymus, bone marrow, colon, small intestine, appendix and placenta, and in fetal liver and thymus.

The protein localises to the nucleus. It localises to the chromosome. Its subcellular location is the centromere. It is found in the kinetochore. The protein resides in the cytoplasm. Functionally, acts as a component of the outer kinetochore KNL1 complex that serves as a docking point for spindle assembly checkpoint components and mediates microtubule-kinetochore interactions. Kinetochores, consisting of a centromere-associated inner segment and a microtubule-contacting outer segment, play a crucial role in chromosome segregation by mediating the physical connection between centromeric DNA and spindle microtubules. The outer kinetochore is made up of the ten-subunit KMN network, comprising the MIS12, NDC80 and KNL1 complexes, and auxiliary microtubule-associated components; together they connect the outer kinetochore with the inner kinetochore, bind microtubules, and mediate interactions with mitotic checkpoint proteins that delay anaphase until chromosomes are bioriented on the spindle. Required for kinetochore binding by a distinct subset of kMAPs (kinetochore-bound microtubule-associated proteins) and motors. Acts in coordination with CENPK to recruit the NDC80 complex to the outer kinetochore. Can bind either to microtubules or to the protein phosphatase 1 (PP1) catalytic subunits PPP1CA and PPP1CC (via overlapping binding sites), it has higher affinity for PP1. Recruits MAD2L1 to the kinetochore and also directly links BUB1 and BUB1B to the kinetochore. In addition to orienting mitotic chromosomes, it is also essential for alignment of homologous chromosomes during meiotic metaphase I. In meiosis I, required to activate the spindle assembly checkpoint at unattached kinetochores to correct erroneous kinetochore-microtubule attachments. This Homo sapiens (Human) protein is Outer kinetochore KNL1 complex subunit KNL1.